The following is a 1195-amino-acid chain: Voltage-gated inwardly rectifying potassium channel KCNH7 (1195 aa).

The Cytoplasmic segment spans residues 1–412; it reads MPVRRGHVAP…YSPFKAVWDW (412 aa). In terms of domain architecture, PAS spans 41–70; the sequence is IIYCNDGFCEMTGFSRPDVMQKPCTCDFLH. The PAC domain occupies 92 to 144; sequence RKVEVTYYHKNGSTFICNTHIIPVKNQEGVAMMFIINFEYVTDEENAATPERV. Serine 174 is modified (phosphoserine). Positions 194–216 are disordered; the sequence is SVAMKHFKSPTKESCSPSEADDT. A phosphoserine mark is found at serine 238 and serine 319. Residues 413-433 form a helical membrane-spanning segment; that stretch reads LILLLVIYTAIFTPYSAAFLL. The Extracellular portion of the chain corresponds to 434–449; sequence NDREEQKRRECGYSCS. The chain crosses the membrane as a helical span at residues 450 to 470; it reads PLNVVDLIVDIMFIIDILINF. The Cytoplasmic portion of the chain corresponds to 471-494; sequence RTTYVNQNEEVVSDPAKIAIHYFK. Residues 495–515 traverse the membrane as a helical segment; it reads GWFLIDMVAAIPFDLLIFGSG. Over 516–521 the chain is Extracellular; it reads SDETTT. A helical; Voltage-sensor membrane pass occupies residues 522–542; that stretch reads LIGLLKTARLLRLVRVARKLD. Residues 543 to 549 lie on the Cytoplasmic side of the membrane; that stretch reads RYSEYGA. A helical transmembrane segment spans residues 550–570; it reads AVLMLLMCIFALIAHWLACIW. The Extracellular portion of the chain corresponds to 571 to 614; that stretch reads YAIGNVERPYLTDKIGWLDSLGTQIGKRYNDSDSSSGPSIKDKY. N-linked (GlcNAc...) asparagine glycosylation occurs at asparagine 600. An intramembrane region (pore-forming) is located at residues 615–635; it reads VTALYFTFSSLTSVGFGNVSP. Residues 627–632 carry the Selectivity filter motif; that stretch reads SVGFGN. Over 636–641 the chain is Extracellular; sequence NTNSEK. The chain crosses the membrane as a helical span at residues 642 to 662; that stretch reads IFSICVMLIGSLMYASIFGNV. Topologically, residues 663–1195 are cytoplasmic; the sequence is SAIIQRLYSG…HVSDPGLPGK (533 aa). Positions 745–845 are cNMP-binding domain; sequence AFRGASKGCL…IQREDLLEVL (101 aa). Positions 870–915 are disordered; it reads AKSQSVNDSEGDTGKLRRRRLSFESEGEKDFSKENSANDADDSTDT. A compositionally biased stretch (basic and acidic residues) spans 890–902; it reads LSFESEGEKDFSK. Residues serine 891 and serine 894 each carry the phosphoserine modification. A coiled-coil region spans residues 1027–1054; sequence YGEVEQRLDLLQEQLNRLESQMTTDIQA.

The protein belongs to the potassium channel family. H (Eag) (TC 1.A.1.20) subfamily. Kv11.3/KCNH7 sub-subfamily. In terms of assembly, the potassium channel is probably composed of a homo- or heterotetrameric complex of pore-forming alpha subunits that can associate only within their subfamily.

It localises to the cell membrane. It carries out the reaction K(+)(in) = K(+)(out). Its function is as follows. Pore-forming (alpha) subunit of voltage-gated inwardly rectifying potassium channel. Exhibits faster activation and deactivation kinetics and slow inactivation at membrane potentials positive to 240 mV, resulting in the weakest inward rectification. In Mus musculus (Mouse), this protein is Voltage-gated inwardly rectifying potassium channel KCNH7.